Reading from the N-terminus, the 392-residue chain is Protein-glutamate methylesterase/protein-glutamine glutaminase (392 aa).

The region spanning 9-126 is the Response regulatory domain; sequence TVLIVDDSPF…GADIQALARD (118 aa). At Asp-60 the chain carries 4-aspartylphosphate. The tract at residues 148 to 194 is disordered; the sequence is VSRISSASGSRPPWTAGAASENTNRLSSPGSTSSTLGSAKGRSLDSG. Over residues 173–185 the composition is skewed to low complexity; sequence LSSPGSTSSTLGS. Residues 198–392 form the CheB-type methylesterase domain; it reads PKYPVEIVAI…RHIVECVQRR (195 aa). Catalysis depends on residues Ser-210, His-237, and Asp-334.

It belongs to the CheB family. Post-translationally, phosphorylated by CheA. Phosphorylation of the N-terminal regulatory domain activates the methylesterase activity.

The protein localises to the cytoplasm. It carries out the reaction [protein]-L-glutamate 5-O-methyl ester + H2O = L-glutamyl-[protein] + methanol + H(+). The enzyme catalyses L-glutaminyl-[protein] + H2O = L-glutamyl-[protein] + NH4(+). In terms of biological role, involved in chemotaxis. Part of a chemotaxis signal transduction system that modulates chemotaxis in response to various stimuli. Catalyzes the demethylation of specific methylglutamate residues introduced into the chemoreceptors (methyl-accepting chemotaxis proteins or MCP) by CheR. Also mediates the irreversible deamidation of specific glutamine residues to glutamic acid. The sequence is that of Protein-glutamate methylesterase/protein-glutamine glutaminase from Desulfitobacterium hafniense (strain Y51).